The chain runs to 265 residues: Thymidine kinase 2, mitochondrial (265 aa).

A mitochondrion-targeting transit peptide spans 1–33 (MLLWPLRGWAARALRCFGPGSRGSPASGPGPRR). Positions 20–32 (GSRGSPASGPGPR) are enriched in low complexity. Positions 20 to 47 (GSRGSPASGPGPRRVQRRAWPPDKEQEK) are disordered. 57–65 (GNIASGKTT) provides a ligand contact to ATP. E133 acts as the Proton acceptor in catalysis.

It belongs to the DCK/DGK family. As to quaternary structure, monomer. In terms of tissue distribution, predominantly expressed in liver, pancreas, muscle, and brain.

The protein resides in the mitochondrion. The catalysed reaction is thymidine + ATP = dTMP + ADP + H(+). The enzyme catalyses 2'-deoxycytidine + ATP = dCMP + ADP + H(+). It carries out the reaction 2'-deoxyuridine + ATP = dUMP + ADP + H(+). Phosphorylates thymidine, deoxycytidine, and deoxyuridine in the mitochondrial matrix. In non-replicating cells, where cytosolic dNTP synthesis is down-regulated, mtDNA synthesis depends solely on TK2 and DGUOK. Widely used as target of antiviral and chemotherapeutic agents. This Homo sapiens (Human) protein is Thymidine kinase 2, mitochondrial.